A 370-amino-acid polypeptide reads, in one-letter code: DNA replication and repair protein RecF (370 aa).

An ATP-binding site is contributed by 30 to 37 (GPNGSGKT).

The protein belongs to the RecF family.

Its subcellular location is the cytoplasm. Its function is as follows. The RecF protein is involved in DNA metabolism; it is required for DNA replication and normal SOS inducibility. RecF binds preferentially to single-stranded, linear DNA. It also seems to bind ATP. The sequence is that of DNA replication and repair protein RecF from Prosthecochloris aestuarii (strain DSM 271 / SK 413).